We begin with the raw amino-acid sequence, 567 residues long: UPF0313 protein TM_0337 (567 aa).

Residues 288 to 560 form the Radical SAM core domain; it reads KAIETVKFSI…NKMKENVLFK (273 aa). Residues Cys-303, Cys-307, and Cys-310 each coordinate [4Fe-4S] cluster.

Belongs to the UPF0313 family. [4Fe-4S] cluster is required as a cofactor.

The chain is UPF0313 protein TM_0337 from Thermotoga maritima (strain ATCC 43589 / DSM 3109 / JCM 10099 / NBRC 100826 / MSB8).